The sequence spans 325 residues: MEPTLKNILENPSLKWIFVGGKGGVGKTTTSSSLATLFAKSGKKTIIISTDPAHNLSDCFDQKIGGQPILIKGIDNLSAMEIDPTVDPDKLKLPTLQGFMNDQATKSLLSELISSVPGIDEAMSFAELMNSVDEMKYDLIIFDTAPTGHTLRLLNFPNIMEKGLNKLVQLRYNFQNLASQFQGLFGSQEEFDQQMNQMFSKIETMKDTVTKVNAQMKDKNKTTFIGVCIPEFLSMYETERLVQELTKFKIDIHNIVINQVLFPDDQCKMCNARAKMQKKYLDQMIDLYDDFHVVIMPLQENEVRGIDGLKQFCELLLKPKTVPQV.

22 to 29 (KGGVGKTT) lines the ATP pocket. The active site involves Asp51. ATP-binding residues include Glu231 and Asn258. Cys267 and Cys270 together coordinate Zn(2+).

The protein belongs to the arsA ATPase family. In terms of assembly, homodimer.

It localises to the cytoplasm. The protein resides in the endoplasmic reticulum. Functionally, ATPase required for the post-translational delivery of tail-anchored (TA) proteins to the endoplasmic reticulum. Recognizes and selectively binds the transmembrane domain of TA proteins in the cytosol. This complex then targets to the endoplasmic reticulum by membrane-bound receptors, where the tail-anchored protein is released for insertion. This process is regulated by ATP binding and hydrolysis. ATP binding drives the homodimer towards the closed dimer state, facilitating recognition of newly synthesized TA membrane proteins. ATP hydrolysis is required for insertion. Subsequently, the homodimer reverts towards the open dimer state, lowering its affinity for the membrane-bound receptor, and returning it to the cytosol to initiate a new round of targeting. This Paramecium tetraurelia protein is ATPase ASNA1 homolog 2.